The following is a 272-amino-acid chain: MTDLHSLLIAFILGVVEGLTEFLPVSSTGHMIIVGHWLGFVDEKAKTFEVIIQLGSILAVVVMFWRRLFGLIGIHFGKVPHEGKTSGRLKLTHILLAMIPAVVLGLIFHDVIKSLFYPQNVMYSLVIGGFLLLAAEWFKPKEPRAVGLDDITHRQAFMIGCFQCLALWPGFSRSGATISGGMLMGVSRYAASEFSFILAVPMMMGATVLDLYKSWHFLSLADVPMFAVGFVTAFVVALIAIKTFLKIIKRISFIPFAIYRFIVAGVVYMVFM.

The next 7 membrane-spanning stretches (helical) occupy residues 6–26 (SLLIAFILGVVEGLTEFLPVS), 45–65 (AKTFEVIIQLGSILAVVVMFW), 92–112 (THILLAMIPAVVLGLIFHDVI), 115–135 (LFYPQNVMYSLVIGGFLLLAA), 189–209 (YAASEFSFILAVPMMMGATVL), 221–241 (ADVPMFAVGFVTAFVVALIAI), and 251–271 (ISFIPFAIYRFIVAGVVYMVF).

It belongs to the UppP family.

It localises to the cell inner membrane. The catalysed reaction is di-trans,octa-cis-undecaprenyl diphosphate + H2O = di-trans,octa-cis-undecaprenyl phosphate + phosphate + H(+). In terms of biological role, catalyzes the dephosphorylation of undecaprenyl diphosphate (UPP). Confers resistance to bacitracin. The sequence is that of Undecaprenyl-diphosphatase from Pectobacterium atrosepticum (strain SCRI 1043 / ATCC BAA-672) (Erwinia carotovora subsp. atroseptica).